Here is a 151-residue protein sequence, read N- to C-terminus: Protein-export protein SecB (151 aa).

This sequence belongs to the SecB family. Homotetramer, a dimer of dimers. One homotetramer interacts with 1 SecA dimer.

It is found in the cytoplasm. Functionally, one of the proteins required for the normal export of preproteins out of the cell cytoplasm. It is a molecular chaperone that binds to a subset of precursor proteins, maintaining them in a translocation-competent state. It also specifically binds to its receptor SecA. This chain is Protein-export protein SecB, found in Azoarcus sp. (strain BH72).